The sequence spans 294 residues: 4-hydroxy-tetrahydrodipicolinate synthase (294 aa).

Threonine 47 provides a ligand contact to pyruvate. Tyrosine 135 acts as the Proton donor/acceptor in catalysis. Residue lysine 163 is the Schiff-base intermediate with substrate of the active site. Valine 205 contacts pyruvate.

Belongs to the DapA family. In terms of assembly, homotetramer; dimer of dimers.

The protein localises to the cytoplasm. It carries out the reaction L-aspartate 4-semialdehyde + pyruvate = (2S,4S)-4-hydroxy-2,3,4,5-tetrahydrodipicolinate + H2O + H(+). It functions in the pathway amino-acid biosynthesis; L-lysine biosynthesis via DAP pathway; (S)-tetrahydrodipicolinate from L-aspartate: step 3/4. In terms of biological role, catalyzes the condensation of (S)-aspartate-beta-semialdehyde [(S)-ASA] and pyruvate to 4-hydroxy-tetrahydrodipicolinate (HTPA). In Rickettsia bellii (strain RML369-C), this protein is 4-hydroxy-tetrahydrodipicolinate synthase.